A 383-amino-acid polypeptide reads, in one-letter code: 4-hydroxy-3-methylbut-2-en-1-yl diphosphate synthase (flavodoxin) (383 aa).

[4Fe-4S] cluster contacts are provided by cysteine 275, cysteine 278, cysteine 310, and glutamate 317.

Belongs to the IspG family. Requires [4Fe-4S] cluster as cofactor.

The catalysed reaction is (2E)-4-hydroxy-3-methylbut-2-enyl diphosphate + oxidized [flavodoxin] + H2O + 2 H(+) = 2-C-methyl-D-erythritol 2,4-cyclic diphosphate + reduced [flavodoxin]. Its pathway is isoprenoid biosynthesis; isopentenyl diphosphate biosynthesis via DXP pathway; isopentenyl diphosphate from 1-deoxy-D-xylulose 5-phosphate: step 5/6. Its function is as follows. Converts 2C-methyl-D-erythritol 2,4-cyclodiphosphate (ME-2,4cPP) into 1-hydroxy-2-methyl-2-(E)-butenyl 4-diphosphate. In Dinoroseobacter shibae (strain DSM 16493 / NCIMB 14021 / DFL 12), this protein is 4-hydroxy-3-methylbut-2-en-1-yl diphosphate synthase (flavodoxin).